A 439-amino-acid chain; its full sequence is Xylose isomerase (439 aa).

Active-site residues include histidine 101 and aspartate 104. Positions 232, 268, 271, 296, 307, 309, and 339 each coordinate Mg(2+).

It belongs to the xylose isomerase family. As to quaternary structure, homotetramer. The cofactor is Mg(2+).

Its subcellular location is the cytoplasm. The enzyme catalyses alpha-D-xylose = alpha-D-xylulofuranose. The polypeptide is Xylose isomerase (xylA) (Lactococcus lactis subsp. lactis (strain IL1403) (Streptococcus lactis)).